The sequence spans 398 residues: Phosphoglycerate kinase (398 aa).

Substrate is bound by residues 21–23, Arg36, 59–62, Arg119, and Arg157; these read DFN and HLGR. ATP-binding positions include Lys208, Gly296, Glu327, and 354–357; that span reads GGDS.

The protein belongs to the phosphoglycerate kinase family. Monomer.

It localises to the cytoplasm. It carries out the reaction (2R)-3-phosphoglycerate + ATP = (2R)-3-phospho-glyceroyl phosphate + ADP. The protein operates within carbohydrate degradation; glycolysis; pyruvate from D-glyceraldehyde 3-phosphate: step 2/5. The sequence is that of Phosphoglycerate kinase from Streptococcus mutans serotype c (strain ATCC 700610 / UA159).